The chain runs to 769 residues: Phosphoribosylformylglycinamidine synthase subunit PurL (769 aa).

Positions 1-13 are enriched in polar residues; it reads MTGTPSAPTTSPD. Residues 1 to 30 are disordered; sequence MTGTPSAPTTSPDDQADGPGEGTVDRQPYR. The active site involves His-65. Tyr-68 and Lys-109 together coordinate ATP. Glu-111 contributes to the Mg(2+) binding site. Substrate contacts are provided by residues 112–115 and Arg-134; that span reads SHNH. Catalysis depends on His-113, which acts as the Proton acceptor. Asp-135 is a Mg(2+) binding site. A substrate-binding site is contributed by Gln-260. Asp-288 provides a ligand contact to Mg(2+). Substrate is bound at residue 337-339; it reads ESQ. ATP is bound by residues Asn-524 and Gly-561. Asn-562 provides a ligand contact to Mg(2+). Substrate is bound at residue Ser-564.

This sequence belongs to the FGAMS family. As to quaternary structure, monomer. Part of the FGAM synthase complex composed of 1 PurL, 1 PurQ and 2 PurS subunits.

It localises to the cytoplasm. It carries out the reaction N(2)-formyl-N(1)-(5-phospho-beta-D-ribosyl)glycinamide + L-glutamine + ATP + H2O = 2-formamido-N(1)-(5-O-phospho-beta-D-ribosyl)acetamidine + L-glutamate + ADP + phosphate + H(+). The protein operates within purine metabolism; IMP biosynthesis via de novo pathway; 5-amino-1-(5-phospho-D-ribosyl)imidazole from N(2)-formyl-N(1)-(5-phospho-D-ribosyl)glycinamide: step 1/2. Its function is as follows. Part of the phosphoribosylformylglycinamidine synthase complex involved in the purines biosynthetic pathway. Catalyzes the ATP-dependent conversion of formylglycinamide ribonucleotide (FGAR) and glutamine to yield formylglycinamidine ribonucleotide (FGAM) and glutamate. The FGAM synthase complex is composed of three subunits. PurQ produces an ammonia molecule by converting glutamine to glutamate. PurL transfers the ammonia molecule to FGAR to form FGAM in an ATP-dependent manner. PurS interacts with PurQ and PurL and is thought to assist in the transfer of the ammonia molecule from PurQ to PurL. In Parafrankia sp. (strain EAN1pec), this protein is Phosphoribosylformylglycinamidine synthase subunit PurL.